Reading from the N-terminus, the 250-residue chain is Triosephosphate isomerase (250 aa).

A substrate-binding site is contributed by 9 to 11; sequence NWK. Catalysis depends on His-95, which acts as the Electrophile. Catalysis depends on Glu-167, which acts as the Proton acceptor. Residues Gly-173, Ser-213, and 234 to 235 each bind substrate; that span reads GG.

This sequence belongs to the triosephosphate isomerase family. In terms of assembly, homodimer.

It is found in the cytoplasm. The catalysed reaction is D-glyceraldehyde 3-phosphate = dihydroxyacetone phosphate. Its pathway is carbohydrate biosynthesis; gluconeogenesis. The protein operates within carbohydrate degradation; glycolysis; D-glyceraldehyde 3-phosphate from glycerone phosphate: step 1/1. In terms of biological role, involved in the gluconeogenesis. Catalyzes stereospecifically the conversion of dihydroxyacetone phosphate (DHAP) to D-glyceraldehyde-3-phosphate (G3P). This Flavobacterium psychrophilum (strain ATCC 49511 / DSM 21280 / CIP 103535 / JIP02/86) protein is Triosephosphate isomerase.